The primary structure comprises 634 residues: CRISPR-associated protein MJ1674 (634 aa).

CRISPR (clustered regularly interspaced short palindromic repeat) is an adaptive immune system that provides protection against mobile genetic elements (viruses, transposable elements and conjugative plasmids). CRISPR clusters contain spacers, sequences complementary to antecedent mobile elements, and target invading nucleic acids. CRISPR clusters are transcribed and processed into CRISPR RNA (crRNA). The type III Csm effector complex binds crRNA and acts as a crRNA-guided RNase, DNase and cyclic oligoadenylate synthase; binding of target RNA cognate to the crRNA is required for all activities. This is CRISPR-associated protein MJ1674 from Methanocaldococcus jannaschii (strain ATCC 43067 / DSM 2661 / JAL-1 / JCM 10045 / NBRC 100440) (Methanococcus jannaschii).